Reading from the N-terminus, the 210-residue chain is Urease accessory protein UreE (210 aa).

The disordered stretch occupies residues 144-210 (PEGGAYAAGG…GHAHPHSLAR (67 aa)). The span at 156–202 (HGHDHPHHDHGHDHAHAHAHGTEACDHEHSHDHDCGHHHDHGQDYGH) shows a compositional bias: basic and acidic residues.

The protein belongs to the UreE family.

The protein localises to the cytoplasm. Its function is as follows. Involved in urease metallocenter assembly. Binds nickel. Probably functions as a nickel donor during metallocenter assembly. The protein is Urease accessory protein UreE of Paracidovorax citrulli (strain AAC00-1) (Acidovorax citrulli).